Here is a 318-residue protein sequence, read N- to C-terminus: NADH-ubiquinone oxidoreductase chain 1 (318 aa).

8 consecutive transmembrane segments (helical) span residues 2–22 (FMINLFSLIIPILLAVAFLTL), 69–89 (FMFTIAPALALTLALTMWVPL), 102–122 (MLFILAMSSLAVYSILWSGWA), 146–166 (LAIILLPTMLMNGSFTLSTLT), 171–191 (HLWLIFPLWPLAMMWFVSTLA), 231–251 (IIMMNALTAILFLGTFHNPLL), 253–273 (EAHTINLILKTSLLTICFLWV), and 294–314 (LPLTLALCMWHMSIPIMLACI).

The protein belongs to the complex I subunit 1 family. Core subunit of respiratory chain NADH dehydrogenase (Complex I) which is composed of 45 different subunits.

The protein resides in the mitochondrion inner membrane. The catalysed reaction is a ubiquinone + NADH + 5 H(+)(in) = a ubiquinol + NAD(+) + 4 H(+)(out). In terms of biological role, core subunit of the mitochondrial membrane respiratory chain NADH dehydrogenase (Complex I) which catalyzes electron transfer from NADH through the respiratory chain, using ubiquinone as an electron acceptor. Essential for the catalytic activity and assembly of complex I. This chain is NADH-ubiquinone oxidoreductase chain 1 (MT-ND1), found in Dugong dugon (Dugong).